We begin with the raw amino-acid sequence, 1682 residues long: Calmodulin-binding transcription activator 1 (1682 aa).

The segment at residues 63–188 (KCSSLPKERH…YLNVPAIEDC (126 aa)) is a DNA-binding region (CG-1). Positions 112–119 (RKKVKYRK) match the Nuclear localization signal motif. Disordered regions lie at residues 284-375 (RIIS…MVDS) and 599-622 (SSFS…FLQD). Positions 302-327 (EVQHNDVSEGKHEPSHGRSTSREKRN) are enriched in basic and acidic residues. 2 stretches are compositionally biased toward polar residues: residues 337 to 367 (HQNS…SGLN) and 599 to 618 (SSFS…SPSF). The IPT/TIG domain occupies 877 to 955 (DYSPEWSYPE…ISNSVVFEYK (79 aa)). The segment at 992–1020 (MAEMTGSQQHKQASGGGGSGSGSGSGAGG) is disordered. A compositionally biased stretch (gly residues) spans 1005 to 1020 (SGGGGSGSGSGSGAGG). 3 ANK repeats span residues 1066–1095 (RGMT…KHAD), 1111–1141 (FSCT…AISI), and 1145–1174 (LGRL…DEQA). Disordered regions lie at residues 1217 to 1249 (ASTN…KKHK) and 1267 to 1318 (LSLE…SASQ). Residues 1268–1291 (SLEQPNIRKQSPRSKQPSPETISP) are compositionally biased toward polar residues. Residues 1308-1318 (ETAASQASASQ) show a composition bias toward low complexity. IQ domains are found at residues 1549-1585 (QEVA…AAIL), 1586-1608 (IQSK…AAVL), and 1609-1631 (IQNF…TAVI).

This sequence belongs to the CAMTA family. As to quaternary structure, may interact with calmodulin.

Its subcellular location is the nucleus. It localises to the cytoplasm. Functionally, transcriptional activator. This Mus musculus (Mouse) protein is Calmodulin-binding transcription activator 1.